The following is a 201-amino-acid chain: Glycerol-3-phosphate acyltransferase (201 aa).

5 helical membrane passes run 4 to 24 (LVAA…LVLT), 55 to 75 (LATL…VWVL), 80 to 100 (MVPV…WLGF), 110 to 130 (IGTL…TWLV), and 152 to 174 (FALY…MGFY).

This sequence belongs to the PlsY family. As to quaternary structure, probably interacts with PlsX.

It localises to the cell inner membrane. The enzyme catalyses an acyl phosphate + sn-glycerol 3-phosphate = a 1-acyl-sn-glycero-3-phosphate + phosphate. It functions in the pathway lipid metabolism; phospholipid metabolism. Catalyzes the transfer of an acyl group from acyl-phosphate (acyl-PO(4)) to glycerol-3-phosphate (G3P) to form lysophosphatidic acid (LPA). This enzyme utilizes acyl-phosphate as fatty acyl donor, but not acyl-CoA or acyl-ACP. The protein is Glycerol-3-phosphate acyltransferase of Paramagnetospirillum magneticum (strain ATCC 700264 / AMB-1) (Magnetospirillum magneticum).